The chain runs to 971 residues: uncharacterized protein (971 aa).

Positions 1-24 (MQSNLLKVLGVLAIVATLVCFIFA) are cleaved as a signal peptide. The tract at residues 127-146 (RTRPGKSNLDDSGQMIPIPR) is disordered. The next 6 helical transmembrane spans lie at 611–631 (IKAI…LGFA), 721–741 (LGLS…IVII), 753–773 (AFMA…FLLF), 795–815 (VVMM…LDFV), 832–852 (FIGT…INWF), and 865–885 (GVNM…YGYV). The disordered stretch occupies residues 933–971 (TGRAKSRLEQRNRTLEHAEQNSKKYKKRIGENTNEETLK). A compositionally biased stretch (basic and acidic residues) spans 938–954 (SRLEQRNRTLEHAEQNS).

Belongs to the TrbL/VirB6 family.

It is found in the cell membrane. This is an uncharacterized protein from Rickettsia prowazekii (strain Madrid E).